Here is a 225-residue protein sequence, read N- to C-terminus: Ribose-5-phosphate isomerase A (225 aa).

Residues 27 to 30 (SGST), 82 to 85 (DGAD), and 95 to 98 (KGGG) each bind substrate. E104 functions as the Proton acceptor in the catalytic mechanism. Position 122 (K122) interacts with substrate.

This sequence belongs to the ribose 5-phosphate isomerase family. Homodimer.

It catalyses the reaction aldehydo-D-ribose 5-phosphate = D-ribulose 5-phosphate. It functions in the pathway carbohydrate degradation; pentose phosphate pathway; D-ribose 5-phosphate from D-ribulose 5-phosphate (non-oxidative stage): step 1/1. Functionally, catalyzes the reversible conversion of ribose-5-phosphate to ribulose 5-phosphate. This is Ribose-5-phosphate isomerase A from Archaeoglobus fulgidus (strain ATCC 49558 / DSM 4304 / JCM 9628 / NBRC 100126 / VC-16).